The primary structure comprises 520 residues: Ubiquitin carboxyl-terminal hydrolase 3 (520 aa).

At Met-1 the chain carries N-acetylmethionine. A UBP-type zinc finger spans residues 1 to 121 (MECPHLSSSV…QKVREHLQNL (121 aa)). Residues Cys-3, His-5, Cys-29, Cys-32, Cys-41, Cys-44, Cys-49, His-56, His-60, His-82, Cys-95, and Cys-98 each contribute to the Zn(2+) site. The USP domain maps to 159-511 (TGLRNLGNTC…KAYILFYVER (353 aa)). The active-site Nucleophile is Cys-168. The Proton acceptor role is filled by His-471.

The protein belongs to the peptidase C19 family. USP3 subfamily. Interacts (via UBP-type domain) with H2A; the interaction is less efficient than with monoubiquitinated H2A.

The protein resides in the nucleus. It is found in the cytoplasm. The catalysed reaction is Thiol-dependent hydrolysis of ester, thioester, amide, peptide and isopeptide bonds formed by the C-terminal Gly of ubiquitin (a 76-residue protein attached to proteins as an intracellular targeting signal).. Functionally, deubiquitinase that plays a role in several cellular processes including transcriptional regulation, cell cycle progression or innate immunity. In response to DNA damage, deubiquitinates monoubiquitinated target proteins such as histone H2A and H2AX and thereby counteracts RNF168- and RNF8-mediated ubiquitination. In turn, participates in the recruitment of DNA damage repair factors to DNA break sites. Required for proper progression through S phase and subsequent mitotic entry. Acts as a positive regulator of TP53 by deubiquitinating and stabilizing it to promote normal cell proliferation and transformation. Participates in establishing tolerance innate immune memory through non-transcriptional feedback. Mechanistically, negatively regulates TLR-induced NF-kappa-B signaling by targeting and removing the 'Lys-63'-linked polyubiquitin chains on MYD88. Negatively regulates the activation of type I interferon signaling by mediating 'Lys-63'-linked polyubiquitin chains on RIGI and IFIH1. Also deubiquinates ASC/PYCARD, the central adapter mediating the assembly and activation of most inflammasomes, and thereby promotes inflammasome activation. The polypeptide is Ubiquitin carboxyl-terminal hydrolase 3 (Usp3) (Mus musculus (Mouse)).